A 337-amino-acid chain; its full sequence is DNA-directed RNA polymerase subunit alpha (337 aa).

The alpha N-terminal domain (alpha-NTD) stretch occupies residues 1–233 (MVREEVVGST…DLFIPFLHAE (233 aa)). The tract at residues 265-337 (KEIALKCIFI…FAIDLPKNKF (73 aa)) is alpha C-terminal domain (alpha-CTD).

It belongs to the RNA polymerase alpha chain family. In plastids the minimal PEP RNA polymerase catalytic core is composed of four subunits: alpha, beta, beta', and beta''. When a (nuclear-encoded) sigma factor is associated with the core the holoenzyme is formed, which can initiate transcription.

It localises to the plastid. Its subcellular location is the chloroplast. The enzyme catalyses RNA(n) + a ribonucleoside 5'-triphosphate = RNA(n+1) + diphosphate. In terms of biological role, DNA-dependent RNA polymerase catalyzes the transcription of DNA into RNA using the four ribonucleoside triphosphates as substrates. The sequence is that of DNA-directed RNA polymerase subunit alpha from Acorus calamus (Sweet flag).